Consider the following 289-residue polypeptide: Protease HtpX (289 aa).

The next 2 helical transmembrane spans lie at 5-25 (IVLFAITNIAVLILASIVMSL) and 33-53 (MSGLLVMALILGFGGSLISLL). Residue His140 coordinates Zn(2+). Glu141 is a catalytic residue. His144 serves as a coordination point for Zn(2+). A run of 2 helical transmembrane segments spans residues 155-175 (LLQGVLNTFVIVLARVVGGFI) and 193-213 (GIVLVLELLFGLFATIITMWF). Glu218 lines the Zn(2+) pocket.

The protein belongs to the peptidase M48B family. The cofactor is Zn(2+).

The protein localises to the cell inner membrane. The sequence is that of Protease HtpX from Xylella fastidiosa (strain M23).